A 555-amino-acid polypeptide reads, in one-letter code: Formate--tetrahydrofolate ligase (555 aa).

Residue 65–72 (TPAGEGKS) participates in ATP binding.

The protein belongs to the formate--tetrahydrofolate ligase family.

It catalyses the reaction (6S)-5,6,7,8-tetrahydrofolate + formate + ATP = (6R)-10-formyltetrahydrofolate + ADP + phosphate. It participates in one-carbon metabolism; tetrahydrofolate interconversion. This is Formate--tetrahydrofolate ligase from Staphylococcus aureus (strain MRSA252).